A 651-amino-acid chain; its full sequence is L-type lectin-domain containing receptor kinase IX.1 (651 aa).

The first 19 residues, 1 to 19 (MANSILLFSFVLVLPFVCS), serve as a signal peptide directing secretion. A legume-lectin like region spans residues 20-251 (VQFNISRFGS…GNRLLSWEFS (232 aa)). The Extracellular segment spans residues 20–269 (VQFNISRFGS…KKSQNDKKGM (250 aa)). N-linked (GlcNAc...) asparagine glycosylation is found at Asn23, Asn125, Asn129, Asn162, Asn169, Asn174, Asn195, and Asn211. The chain crosses the membrane as a helical span at residues 270 to 290 (IIGISVSGFVLLTFFITSLIV). Residues 291–651 (FLKRKQQKKK…VTFSSAQHGR (361 aa)) are Cytoplasmic-facing. The region spanning 335 to 616 (FADDRKLGEG…LNLEAPVPHL (282 aa)) is the Protein kinase domain. ATP-binding positions include 341–349 (LGEGGFGAV) and Lys364. The active-site Proton acceptor is Asp459. The disordered stretch occupies residues 630–651 (SNTTSVSSGGATVTFSSAQHGR).

In the C-terminal section; belongs to the protein kinase superfamily. Ser/Thr protein kinase family. This sequence in the N-terminal section; belongs to the leguminous lectin family. As to quaternary structure, interacts with ABCG40.

Its subcellular location is the cell membrane. It carries out the reaction L-seryl-[protein] + ATP = O-phospho-L-seryl-[protein] + ADP + H(+). It catalyses the reaction L-threonyl-[protein] + ATP = O-phospho-L-threonyl-[protein] + ADP + H(+). Promotes hydrogen peroxide H(2)O(2) production and cell death. In terms of biological role, involved in resistance response to the pathogenic oomycetes Phytophthora infestans and Phytophthora capsici. The protein is L-type lectin-domain containing receptor kinase IX.1 of Arabidopsis thaliana (Mouse-ear cress).